Consider the following 755-residue polypeptide: Lysosome membrane protein 2-B (755 aa).

Over 1-6 the chain is Cytoplasmic; the sequence is MKHIGR. Residues 7-27 traverse the membrane as a helical segment; the sequence is IVSFPIGLVLIAVGIIIFVVV. Residues Asn28, Asn76, Asn379, Asn465, Asn497, Asn588, Asn607, and Asn680 are each glycosylated (N-linked (GlcNAc...) asparagine). The Lumenal portion of the chain corresponds to 28–727; sequence NRTIKDEFKK…AYKVDSFRYA (700 aa). The helical transmembrane segment at 728–748 threads the bilayer; sequence ITVILIVVGGFLSLISGGLFV. Residues 749 to 755 lie on the Cytoplasmic side of the membrane; that stretch reads LDKIIDL. Residues 752 to 753 carry the Di-leucine motif motif; that stretch reads II.

Belongs to the CD36 family. In terms of processing, heavily glycosylated.

It localises to the lysosome membrane. Functionally, may act as a lysosomal receptor. May be involved in macropinocytosis and fluid phase exocytosis. This Dictyostelium discoideum (Social amoeba) protein is Lysosome membrane protein 2-B (lmpB).